A 259-amino-acid polypeptide reads, in one-letter code: ATP synthase subunit b 2 (259 aa).

A helical membrane pass occupies residues 5-27; the sequence is WFTVSAQAINFLILVALLKRFLY.

This sequence belongs to the ATPase B chain family. As to quaternary structure, F-type ATPases have 2 components, F(1) - the catalytic core - and F(0) - the membrane proton channel. F(1) has five subunits: alpha(3), beta(3), gamma(1), delta(1), epsilon(1). F(0) has three main subunits: a(1), b(2) and c(10-14). The alpha and beta chains form an alternating ring which encloses part of the gamma chain. F(1) is attached to F(0) by a central stalk formed by the gamma and epsilon chains, while a peripheral stalk is formed by the delta and b chains.

The protein resides in the cell inner membrane. F(1)F(0) ATP synthase produces ATP from ADP in the presence of a proton or sodium gradient. F-type ATPases consist of two structural domains, F(1) containing the extramembraneous catalytic core and F(0) containing the membrane proton channel, linked together by a central stalk and a peripheral stalk. During catalysis, ATP synthesis in the catalytic domain of F(1) is coupled via a rotary mechanism of the central stalk subunits to proton translocation. In terms of biological role, component of the F(0) channel, it forms part of the peripheral stalk, linking F(1) to F(0). In Syntrophotalea carbinolica (strain DSM 2380 / NBRC 103641 / GraBd1) (Pelobacter carbinolicus), this protein is ATP synthase subunit b 2.